We begin with the raw amino-acid sequence, 718 residues long: Threonine--tRNA ligase, mitochondrial (718 aa).

Position 52 is a phosphoserine (Ser52). A TGS domain is found at 55 to 121 (QKEPRTIKIS…ETDSDLRFLT (67 aa)).

Belongs to the class-II aminoacyl-tRNA synthetase family. As to quaternary structure, homodimer.

The protein localises to the mitochondrion matrix. The catalysed reaction is tRNA(Thr) + L-threonine + ATP = L-threonyl-tRNA(Thr) + AMP + diphosphate + H(+). In terms of biological role, catalyzes the attachment of threonine to tRNA(Thr) in a two-step reaction: threonine is first activated by ATP to form Thr-AMP and then transferred to the acceptor end of tRNA(Thr). Also edits incorrectly charged tRNA(Thr) via its editing domain. In Homo sapiens (Human), this protein is Threonine--tRNA ligase, mitochondrial (TARS2).